The sequence spans 700 residues: Methionine--tRNA ligase (700 aa).

A 'HIGH' region motif is present at residues 14-24 (PYANGPVHLGH). Zn(2+) is bound by residues C146, C149, C159, and C162. The 'KMSKS' region signature appears at 343 to 347 (KFSKS). K346 lines the ATP pocket. Residues 599 to 700 (EFEKIDLRVA…GDSIVGKPVK (102 aa)) form the tRNA-binding domain.

It belongs to the class-I aminoacyl-tRNA synthetase family. MetG type 1 subfamily. Homodimer. It depends on Zn(2+) as a cofactor.

It is found in the cytoplasm. The enzyme catalyses tRNA(Met) + L-methionine + ATP = L-methionyl-tRNA(Met) + AMP + diphosphate. In terms of biological role, is required not only for elongation of protein synthesis but also for the initiation of all mRNA translation through initiator tRNA(fMet) aminoacylation. The polypeptide is Methionine--tRNA ligase (Chloroherpeton thalassium (strain ATCC 35110 / GB-78)).